Consider the following 360-residue polypeptide: Aminomethyltransferase (360 aa).

The protein belongs to the GcvT family. The glycine cleavage system is composed of four proteins: P, T, L and H.

The enzyme catalyses N(6)-[(R)-S(8)-aminomethyldihydrolipoyl]-L-lysyl-[protein] + (6S)-5,6,7,8-tetrahydrofolate = N(6)-[(R)-dihydrolipoyl]-L-lysyl-[protein] + (6R)-5,10-methylene-5,6,7,8-tetrahydrofolate + NH4(+). Functionally, the glycine cleavage system catalyzes the degradation of glycine. In Bdellovibrio bacteriovorus (strain ATCC 15356 / DSM 50701 / NCIMB 9529 / HD100), this protein is Aminomethyltransferase.